The sequence spans 231 residues: Protoporphyrinogen IX dehydrogenase [quinone] (231 aa).

A Flavodoxin-like domain is found at 8–178 (CLMLYSTTDG…AVRRFASDFA (171 aa)). Residues 14 to 18 (TTDGH) and 90 to 158 (FFSV…ETDS) each bind FMN. A helical transmembrane segment spans residues 208 to 228 (CLLAIVGMSAAVIVGIRIIAA).

It belongs to the HemG family. Requires FMN as cofactor.

The protein resides in the membrane. It carries out the reaction protoporphyrinogen IX + 3 a menaquinone = protoporphyrin IX + 3 a menaquinol. It catalyses the reaction protoporphyrinogen IX + 3 a ubiquinone = protoporphyrin IX + 3 a ubiquinol. The catalysed reaction is protoporphyrinogen IX + 3 a quinone = protoporphyrin IX + 3 a quinol. It functions in the pathway porphyrin-containing compound metabolism; protoporphyrin-IX biosynthesis; protoporphyrin-IX from protoporphyrinogen-IX: step 1/1. In terms of biological role, in E.coli extracts under anerobic conditions catalyzes the 6-electron oxidation of protoporphyrinogen IX to form protoporphyrin IX, transferring electrons to fumarate reductase, presumably via menaquinone. In vitro under aerobic conditions forms protoporphyrin IX using ubiquinone as an electron acceptor. Complements an E.coli hemG deletion, allowing normal growth in vivo. The sequence is that of Protoporphyrinogen IX dehydrogenase [quinone] from Leishmania major.